The primary structure comprises 417 residues: NADH-quinone oxidoreductase subunit D (417 aa).

This sequence belongs to the complex I 49 kDa subunit family. NDH-1 is composed of 14 different subunits. Subunits NuoB, C, D, E, F, and G constitute the peripheral sector of the complex.

It localises to the cell inner membrane. It catalyses the reaction a quinone + NADH + 5 H(+)(in) = a quinol + NAD(+) + 4 H(+)(out). In terms of biological role, NDH-1 shuttles electrons from NADH, via FMN and iron-sulfur (Fe-S) centers, to quinones in the respiratory chain. The immediate electron acceptor for the enzyme in this species is believed to be ubiquinone. Couples the redox reaction to proton translocation (for every two electrons transferred, four hydrogen ions are translocated across the cytoplasmic membrane), and thus conserves the redox energy in a proton gradient. The chain is NADH-quinone oxidoreductase subunit D from Nitrosococcus oceani (strain ATCC 19707 / BCRC 17464 / JCM 30415 / NCIMB 11848 / C-107).